The primary structure comprises 420 residues: Glutamyl-tRNA reductase (420 aa).

Substrate-binding positions include threonine 49–arginine 52, serine 109, glutamate 114–glutamine 116, and glutamine 120. Residue cysteine 50 is the Nucleophile of the active site. Residue glycine 189–isoleucine 194 coordinates NADP(+).

It belongs to the glutamyl-tRNA reductase family. As to quaternary structure, homodimer.

It catalyses the reaction (S)-4-amino-5-oxopentanoate + tRNA(Glu) + NADP(+) = L-glutamyl-tRNA(Glu) + NADPH + H(+). The protein operates within porphyrin-containing compound metabolism; protoporphyrin-IX biosynthesis; 5-aminolevulinate from L-glutamyl-tRNA(Glu): step 1/2. In terms of biological role, catalyzes the NADPH-dependent reduction of glutamyl-tRNA(Glu) to glutamate 1-semialdehyde (GSA). The sequence is that of Glutamyl-tRNA reductase from Edwardsiella ictaluri (strain 93-146).